A 457-amino-acid chain; its full sequence is CUB1 family protein C30C2.08 (457 aa).

2 coiled-coil regions span residues 119–174 (TQND…NISK) and 418–448 (QELVNSLLTQCHQLIEELRDEKHQHDIEERE).

This sequence belongs to the CUB1 family.

Its subcellular location is the cytoplasm. It localises to the nucleus. Involved in bleomycin tolerance with links to DNA repair and/or proteasome function. The chain is CUB1 family protein C30C2.08 from Schizosaccharomyces pombe (strain 972 / ATCC 24843) (Fission yeast).